Here is a 103-residue protein sequence, read N- to C-terminus: Large ribosomal subunit protein bL21 (103 aa).

This sequence belongs to the bacterial ribosomal protein bL21 family. In terms of assembly, part of the 50S ribosomal subunit. Contacts protein L20.

Functionally, this protein binds to 23S rRNA in the presence of protein L20. The sequence is that of Large ribosomal subunit protein bL21 from Haemophilus ducreyi (strain 35000HP / ATCC 700724).